Here is a 278-residue protein sequence, read N- to C-terminus: Embryonic polyadenylate-binding protein 2 (278 aa).

Disordered regions lie at residues 21–66 (VSSD…GDAG) and 101–128 (EGTP…LSPE). The span at 35-50 (ETKEILGPEGGEGKEE) shows a compositional bias: basic and acidic residues. Acidic residues predominate over residues 51–63 (KEEEEDAEEDQDG). In terms of domain architecture, RRM spans 147-224 (RSVYVGNVDY…RVIKVLPKRT (78 aa)). The disordered stretch occupies residues 227–278 (PGISSTDRGGLRGHPGSRGAPFPHSGLQGRPRLRPQGQNRARGKFSPWFSPY).

As to expression, expressed in various adult tissues.

It is found in the cytoplasm. Binds the poly(A) tail of mRNA. The chain is Embryonic polyadenylate-binding protein 2 (PABPN1L) from Homo sapiens (Human).